The following is a 497-amino-acid chain: Protein DETOXIFICATION 25 (497 aa).

12 consecutive transmembrane segments (helical) span residues 43-63 (LPSTLFRVMSFGCVVVAQAFI), 70-90 (GLAAYALLQSTFIRFIYGIMA), 121-141 (IVDTFIATLFVPFIVLAGPIL), 157-177 (IYPWVIPYLYSIVFTMTMQMY), 186-206 (IIGILSTLALVLDIAATWWCV), 216-236 (ALLGLNISSWSVAIAEFVYVF), 261-281 (LSISSGFMLCLEYWYMSIIVL), 291-311 (IAISAFSICQYIYSWEMNICF), 339-359 (VVLVVSAVIGVICSALCLAFG), 381-401 (IVLSISILFNIIQPILSGVAI), 416-436 (SYYAIGVPLGVLLVYVFNFGI), and 438-458 (GLWSGMLAGVGIQTLILCYVI).

It belongs to the multi antimicrobial extrusion (MATE) (TC 2.A.66.1) family.

The protein resides in the membrane. This Arabidopsis thaliana (Mouse-ear cress) protein is Protein DETOXIFICATION 25.